Reading from the N-terminus, the 94-residue chain is Co-chaperonin GroES (94 aa).

Belongs to the GroES chaperonin family. Heptamer of 7 subunits arranged in a ring. Interacts with the chaperonin GroEL.

Its subcellular location is the cytoplasm. Its function is as follows. Together with the chaperonin GroEL, plays an essential role in assisting protein folding. The GroEL-GroES system forms a nano-cage that allows encapsulation of the non-native substrate proteins and provides a physical environment optimized to promote and accelerate protein folding. GroES binds to the apical surface of the GroEL ring, thereby capping the opening of the GroEL channel. The chain is Co-chaperonin GroES from Bacillus sp. (strain PS3).